A 567-amino-acid chain; its full sequence is Cytochrome P450 monooxygenase 79 (567 aa).

Residues 7–24 (ELAILAIVLLVTAVVFYT) traverse the membrane as a helical segment. Residues N223 and N279 are each glycosylated (N-linked (GlcNAc...) asparagine). C475 is a heme binding site.

This sequence belongs to the cytochrome P450 family. The cofactor is heme.

The protein resides in the membrane. The protein operates within secondary metabolite biosynthesis. In terms of biological role, cytochrome P450 monooxygenase that is able to use dehydroabietic acid as a substrate for oxidation. The polypeptide is Cytochrome P450 monooxygenase 79 (Postia placenta (strain ATCC 44394 / Madison 698-R) (Brown rot fungus)).